We begin with the raw amino-acid sequence, 1468 residues long: ERQLRKENGKQKNELMAMEAEVGEKIGRLQRFKEMAVFKIAALQKVVDNSVSLSELELANRQYNELTAKYRDILQKDNMLVQRTNNLEHLECENVSLKEQMESINKELEITKEKLHTIEQAWEQETKLGNESNMDKAKKSVTNSEIVSISKKITMLEMKELNERQRAEHSQKMYEHVKTSLQQVEERNFELETKFAELTRINLEAQKVEQMLRDELADSVSKTVSDADRQHILELEKSEMELKVEVSKLKEISDIAKRQVEILNAQQQSREKEVESLRTQLLDYQAQSDEKALIAKLHQHVVSLQASEAAALGKVESVASKLQKVEAHTLRLEQKLDEKEQALFYARLEGRNRAKHLRQTIQSLRRQFSGALPLAQQEKFSKTMIQLQNDKLKIMEEMKNSQQEHRSLKNKTLEMELKLKGLEDLISTLKDARGAQKVISWHTKIEELRLQELKLNRELVKDKEEIKYLNNIISEYENTISSLEEEIVQQNKFHEERQMAWDQREVELERQLDVFDRQQSEILREAQKFEEATGSMPDPSLPIPNQLEIALRKIKENIRIILETQATCRSLEEKLREKESALRLAEENILSRDKVINELRLRLPATAEQEKLLAEFSRKEVEPKSHHTLKLAHQTIANMQARLNQKEEVLKKYQHLLEKAREEQREIVKKHEEELHTLHRKLELQADNSLSKFKETAWDLIKQSPTPVPTNKHFIRLAEMEQTVAEQDDSLSSLVIKLKQVSQDLERQKEITELKIKEFENMKLRLQENHADEVKKIKAEVEDLRCLLVQSQKESQSLKSELQTQKEANSRAPTTTMRNLVERLKSQLALKEKQQKALSRALLELRAEMTAAAEERIISMTSQKEANLNVQQIVDRHTKELKSQIEDLNENILKLKEALKTSKNRENTLTDNLNDLTNELQNKQKAYGKVLREKDAVDQENNELKRQIKRLTSGLQGKPLIDNKQSLIEELQKKIKKLESQLERKVDEAEMKPMKEKSAREEVIRWEEGKKWQTKIEGIRNKLKEKEGEVYILTKQLTTLKDLFAKADKEKLTLQRKLKTTGLTVDQVMAARVLESEKELEELKKRNLDLENDISYMRSHQALPRDSVIEDLHLQNKYLQEKLHALEKQLSKDAYSRPSTSGIDSDDHYQREQELQRENLKLSSENIELKFQLEQANKDLPRLKNQVRDLKEMCEFLKKEKAEVERKLGRVRGSGRSGKTIPELEKTIGLMKKVVEKVQRENEQLKKASGILTSEKMANIEMENEKLKAELEKLKVHLGRQLSMHYESKAKGTEKIVAENERLRKELKKIEILKHVPEGDETEQGLQRELRVLRLANSQLEKEKEELIHRIEISKDQNGPDSTISDPDHLMEKIKDLETQLRTSDMEKQHLKEEIQKLKKELENFDPSFFEEIEDLKYNYKEEVKKNILLEEKLKKLSEQFGVELTSPVAASEQFEDEQENPVNFPIY.

Coiled-coil stretches lie at residues E1–K25, S52–A121, K172–A292, V318–K528, R559–R592, H627–N688, and I736–F1441. Residues T1060–Y1468 are self-association (with itself or N-terminus). The interval L1130 to E1152 is disordered.

Part of the tectonic-like complex (also named B9 complex). Interacts with ATF4 via its N-terminal region. Associates with the BBSome complex, interacting (via N-terminus) with BBS4. Interacts with IQCB1/NPHP5; IQCB1 and CEP290/NPHP6 are proposed to form a functional NPHP5-6 module localized to the centrosome. Interacts with NPHP4; the interaction likely requires additional interactors. Interacts with ZNF423, FAM161A, CEP162, CEP162, CEP131, TALPID3, CCDC13, CC2D2A, RPGRIP1. Can self-associate (homo- or heteromeric). Interacts with CCP110; required for suppressing cilia formation. Interacts with RPGR. Associates (via C-terminus) with microtubules; association to microtubule is reduced in response to cellular stress, such as ultraviolet light (UV) radiation or heat shock, in a process that requires p38 MAP kinase signaling. Interacts with FAM161A. Interacts with PCM1. Interacts with CCDC66. Interacts with ARMC9 and CSPP1. In terms of processing, ubiquitinated. May undergo monoubiquitination; monoubiquitination is inhibited in response to cellular stress, such as ultraviolet light (UV) radiation or heat shock, but does not cause its displacement from centriolar satellites.

The protein resides in the cytoplasm. The protein localises to the cytoskeleton. Its subcellular location is the microtubule organizing center. It is found in the centrosome. It localises to the centriolar satellite. The protein resides in the nucleus. The protein localises to the cell projection. Its subcellular location is the cilium. It is found in the cilium basal body. It localises to the centriole. The protein resides in the cytoplasmic vesicle. In terms of biological role, involved in early and late steps in cilia formation. Its association with CCP110 is required for inhibition of primary cilia formation by CCP110. May play a role in early ciliogenesis in the disappearance of centriolar satellites and in the transition of primary ciliar vesicles (PCVs) to capped ciliary vesicles (CCVs). Required for the centrosomal recruitment of RAB8A and for the targeting of centriole satellite proteins to centrosomes such as of PCM1. Required for the correct localization of ciliary and phototransduction proteins in retinal photoreceptor cells; may play a role in ciliary transport processes. Required for efficient recruitment of RAB8A to primary cilium. In the ciliary transition zone is part of the tectonic-like complex which is required for tissue-specific ciliogenesis and may regulate ciliary membrane composition. Involved in regulation of the BBSome complex integrity, specifically for presence of BBS2, BBS5 and BBS8/TTC8 in the complex, and in ciliary targeting of selected BBSome cargos. May play a role in controlling entry of the BBSome complex to cilia possibly implicating IQCB1/NPHP5. Activates ATF4-mediated transcription. This chain is Centrosomal protein of 290 kDa (CEP290), found in Bos taurus (Bovine).